The chain runs to 250 residues: 7-cyano-7-deazaguanine synthase (250 aa).

28–38 (LSGGLDSATCV) is a binding site for ATP. Zn(2+) contacts are provided by C213, C226, C229, and C232.

The protein belongs to the QueC family. Zn(2+) is required as a cofactor.

It carries out the reaction 7-carboxy-7-deazaguanine + NH4(+) + ATP = 7-cyano-7-deazaguanine + ADP + phosphate + H2O + H(+). It functions in the pathway purine metabolism; 7-cyano-7-deazaguanine biosynthesis. In terms of biological role, catalyzes the ATP-dependent conversion of 7-carboxy-7-deazaguanine (CDG) to 7-cyano-7-deazaguanine (preQ(0)). This Rhodopirellula baltica (strain DSM 10527 / NCIMB 13988 / SH1) protein is 7-cyano-7-deazaguanine synthase.